Reading from the N-terminus, the 266-residue chain is Protein crossbronx-like (266 aa).

A UBC core domain is found at 15 to 178; the sequence is KQGYHILAEY…VQEQAIASRN (164 aa).

The protein belongs to the ubiquitin-conjugating enzyme family. FTS subfamily.

The protein is Protein crossbronx-like of Drosophila erecta (Fruit fly).